Here is a 1209-residue protein sequence, read N- to C-terminus: Pre-mRNA-splicing factor rse1 (1209 aa).

It belongs to the RSE1 family. As to quaternary structure, associated with the spliceosome.

It localises to the nucleus. Functionally, involved in pre-mRNA splicing and cell cycle control. This chain is Pre-mRNA-splicing factor rse1 (msp-5), found in Neurospora crassa (strain ATCC 24698 / 74-OR23-1A / CBS 708.71 / DSM 1257 / FGSC 987).